A 183-amino-acid chain; its full sequence is Ion-translocating oxidoreductase complex subunit B (183 aa).

A hydrophobic region spans residues 1 to 23; the sequence is MLSALLVMAAIAVVLGAALGFAA. One can recognise a 4Fe-4S domain in the interval 29–88; sequence EGDPLVDKIDAILPQTQCGQCGYPGCKPYAQAIAQGEADINQCPPGGEEGVRKLADLLGR. Positions 46, 49, 54, 71, 113, 116, 119, 123, 143, 146, 149, and 153 each coordinate [4Fe-4S] cluster. 4Fe-4S ferredoxin-type domains lie at 104-133 and 135-163; these read AVAYIDENVCIGCTLCLQACPVDAIVGAAK and MHTVVDPLCTGCELCVAPCPVDCIYMEPV.

This sequence belongs to the 4Fe4S bacterial-type ferredoxin family. RnfB subfamily. As to quaternary structure, the complex is composed of six subunits: RnfA, RnfB, RnfC, RnfD, RnfE and RnfG. Requires [4Fe-4S] cluster as cofactor.

Its subcellular location is the cell inner membrane. Part of a membrane-bound complex that couples electron transfer with translocation of ions across the membrane. The chain is Ion-translocating oxidoreductase complex subunit B from Azoarcus sp. (strain BH72).